Consider the following 404-residue polypeptide: uncharacterized protein (404 aa).

8 helical membrane passes run 1–21 (MNVLWGLLGAVAIIAIAFLFS), 32–52 (VIVGLCTQVAFGYIVLKWEAG), 89–109 (AFALSVLPVIIFFSALIAVLY), 182–202 (LFGYALLGIPIEYLLAASFMA), 261–281 (LAFVALIAVVNGILGGAFGLF), 285–305 (GVTLESILGYVFSPIAFLIGV), 344–364 (ATIISFALCGFANFSSIAIML), and 384–404 (KAVLAGTLANLLSAAIAGMFI).

Belongs to the concentrative nucleoside transporter (CNT) (TC 2.A.41) family.

Its subcellular location is the cell membrane. This is an uncharacterized protein from Bacillus subtilis (strain 168).